The chain runs to 147 residues: Histidine-containing phosphotransfer protein 1 (147 aa).

The HPt domain maps to 38–133 (APDFVSEVVT…YDLRNKFQAM (96 aa)). H79 is subject to Phosphohistidine.

Two-component system major event consists of a His-to-Asp phosphorelay between a sensor histidine kinase (HK) and a response regulator (RR). In plants, the His-to-Asp phosphorelay involves an additional intermediate named Histidine-containing phosphotransfer protein (HPt). This multistep phosphorelay consists of a His-Asp-His-Asp sequential transfer of a phosphate group between first a His and an Asp of the HK protein, followed by the transfer to a conserved His of the HPt protein and finally the transfer to an Asp in the receiver domain of the RR protein. Widely expressed.

The protein resides in the cytoplasm. It is found in the cytosol. It localises to the nucleus. Functions as a two-component phosphorelay mediators between cytokinin sensor histidine kinases and response regulators (B-type ARRs). Plays an important role in propagating cytokinin signal transduction through the multistep His-to-Asp phosphorelay. Functions as a positive regulator of the cytokinin signaling pathway. May play a regulatory role in salt and drought tolerance during plant development. This is Histidine-containing phosphotransfer protein 1 from Oryza sativa subsp. japonica (Rice).